The chain runs to 316 residues: Phosphate acyltransferase (316 aa).

The protein belongs to the PlsX family. As to quaternary structure, homodimer. Probably interacts with PlsY.

The protein localises to the cytoplasm. The enzyme catalyses a fatty acyl-[ACP] + phosphate = an acyl phosphate + holo-[ACP]. It functions in the pathway lipid metabolism; phospholipid metabolism. Catalyzes the reversible formation of acyl-phosphate (acyl-PO(4)) from acyl-[acyl-carrier-protein] (acyl-ACP). This enzyme utilizes acyl-ACP as fatty acyl donor, but not acyl-CoA. This chain is Phosphate acyltransferase, found in Chlamydia caviae (strain ATCC VR-813 / DSM 19441 / 03DC25 / GPIC) (Chlamydophila caviae).